Reading from the N-terminus, the 262-residue chain is Small ribosomal subunit protein eS4C (262 aa).

Residues 42–105 (LPLIVFLRNR…GEHFRLVYDI (64 aa)) form the S4 RNA-binding domain. Thr-194 is modified (phosphothreonine).

The protein belongs to the eukaryotic ribosomal protein eS4 family. Component of the small ribosomal subunit (SSU). Mature yeast ribosomes consist of a small (40S) and a large (60S) subunit. The 40S small subunit contains 1 molecule of ribosomal RNA (18S rRNA) and at least 33 different proteins. The large 60S subunit contains 3 rRNA molecules (25S, 5.8S and 5S rRNA) and at least 46 different proteins.

Its subcellular location is the cytoplasm. In terms of biological role, component of the ribosome, a large ribonucleoprotein complex responsible for the synthesis of proteins in the cell. The small ribosomal subunit (SSU) binds messenger RNAs (mRNAs) and translates the encoded message by selecting cognate aminoacyl-transfer RNA (tRNA) molecules. The large subunit (LSU) contains the ribosomal catalytic site termed the peptidyl transferase center (PTC), which catalyzes the formation of peptide bonds, thereby polymerizing the amino acids delivered by tRNAs into a polypeptide chain. The nascent polypeptides leave the ribosome through a tunnel in the LSU and interact with protein factors that function in enzymatic processing, targeting, and the membrane insertion of nascent chains at the exit of the ribosomal tunnel. This Schizosaccharomyces pombe (strain 972 / ATCC 24843) (Fission yeast) protein is Small ribosomal subunit protein eS4C (rps403).